A 184-amino-acid chain; its full sequence is Large ribosomal subunit protein bL9 (184 aa).

The segment at 156–184 (RQAKLQNQKSEQQEAEQDASKEAADADDS) is disordered. Over residues 173–184 (DASKEAADADDS) the composition is skewed to basic and acidic residues.

Belongs to the bacterial ribosomal protein bL9 family.

Functionally, binds to the 23S rRNA. The protein is Large ribosomal subunit protein bL9 of Wolbachia pipientis subsp. Culex pipiens (strain wPip).